Reading from the N-terminus, the 1883-residue chain is Endoribonuclease Dicer homolog 1 (1883 aa).

Disordered stretches follow at residues Ala71–Pro97, Ala129–Arg188, and Arg221–Val262. Residues Pro75–Leu96 show a composition bias toward pro residues. Basic and acidic residues-rich tracts occupy residues Ala129–His138 and Glu228–Val262. The 140-residue stretch at Val274–Asn413 folds into the Helicase ATP-binding domain. Residue Leu287 to Thr294 participates in ATP binding. The DECH box signature appears at Asp358–His361. The disordered stretch occupies residues Lys577–Ser604. Residues Leu629 to Thr789 form the Helicase C-terminal domain. The region spanning Ala817–Glu912 is the Dicer dsRNA-binding fold domain. The disordered stretch occupies residues Thr901–Arg928. Basic and acidic residues predominate over residues Gly907–Gln916. One can recognise a PAZ domain in the interval His1163–Pro1296. 2 RNase III domains span residues Leu1320–Gly1498 and Phe1538–Gly1686. Mg(2+)-binding residues include Glu1576, Asp1672, and Glu1675. DRBM domains are found at residues His1712–Glu1775 and Phe1797–Arg1872.

The protein belongs to the helicase family. Dicer subfamily. May interact with ARGONAUTE1 or PINHEAD through their common PAZ domains. It depends on Mg(2+) as a cofactor. The cofactor is Mn(2+).

It localises to the nucleus. Functionally, involved in the RNA silencing pathway. Cleaves double-stranded RNA to produce microRNAs (miRNAs) of 21-24 nucleotides which target the selective destruction of complementary RNAs. Regulates by this way the development of the plant. May not be involved in small interfering RNAs (siRNAs) production. This Oryza sativa subsp. japonica (Rice) protein is Endoribonuclease Dicer homolog 1 (DCL1).